A 183-amino-acid polypeptide reads, in one-letter code: 3-hydroxydecanoyl-[acyl-carrier-protein] dehydratase (183 aa).

The active site involves H77.

Belongs to the thioester dehydratase family. FabA subfamily. As to quaternary structure, homodimer.

The protein resides in the cytoplasm. The catalysed reaction is a (3R)-hydroxyacyl-[ACP] = a (2E)-enoyl-[ACP] + H2O. The enzyme catalyses (3R)-hydroxydecanoyl-[ACP] = (2E)-decenoyl-[ACP] + H2O. It catalyses the reaction (2E)-decenoyl-[ACP] = (3Z)-decenoyl-[ACP]. The protein operates within lipid metabolism; fatty acid biosynthesis. Functionally, necessary for the introduction of cis unsaturation into fatty acids. Catalyzes the dehydration of (3R)-3-hydroxydecanoyl-ACP to E-(2)-decenoyl-ACP and then its isomerization to Z-(3)-decenoyl-ACP. Can catalyze the dehydratase reaction for beta-hydroxyacyl-ACPs with saturated chain lengths up to 16:0, being most active on intermediate chain length. The polypeptide is 3-hydroxydecanoyl-[acyl-carrier-protein] dehydratase (Hahella chejuensis (strain KCTC 2396)).